The primary structure comprises 4717 residues: Midasin (4717 aa).

AAA-ATPase protomer stretches follow at residues 149–384, 458–797, 871–1131, 1157–1448, 1552–1811, and 1858–2106; these read LVQK…FGAF, EQLA…GLRR, EHYI…QEVI, SLKE…NACE, VLRA…EVFD, and VLES…FLLK. ATP-binding positions include 159–166 and 474–481; these read GPEGIGKK and GETGTGKT. Ser-593 carries the phosphoserine modification. ATP is bound by residues 901–908, 1193–1200, 1566–1573, and 1876–1883; these read GPTSSGKT, GDTGCGKT, GSPGVGKT, and GDTATGKT. The linker stretch occupies residues 2173–3925; sequence KLLRKVLLTN…SGVGAEDITN (1753 aa). 3 disordered regions span residues 3898 to 3924, 3936 to 4283, and 4295 to 4365; these read PQEG…EDIT, LANE…LGDH, and EWED…EVGD. Composition is skewed to acidic residues over residues 3936–3950 and 3973–3993; these read LANE…DLDE and ENSD…DIPE. Positions 4020 to 4030 are enriched in polar residues; it reads NEQSAANNESD. Basic and acidic residues predominate over residues 4031-4049; that stretch reads LVSKEDDNKALEDKDRQEK. The segment covering 4050–4066 has biased composition (acidic residues); it reads EDEEEMSDDVGIDDEIQ. Positions 4080–4103 are enriched in basic and acidic residues; the sequence is NEDHLDLPEDLKLDEKEGDVSKDS. Acidic residues-rich tracts occupy residues 4104–4177, 4184–4196, and 4226–4236; these read DLED…ESTE, EELE…EDQA, and ENEELGEEDGA. 2 stretches are compositionally biased toward basic and acidic residues: residues 4258–4275 and 4329–4342; these read QKGE…EADR and AEKD…RDES. A compositionally biased stretch (polar residues) spans 4343 to 4355; that stretch reads ANQNPDSMNSTNI. A VWFA domain is found at 4505–4707; the sequence is QVMISIDDSK…ELPQLLSSAL (203 aa).

This sequence belongs to the midasin family. Associates with pre-60S ribosomes in the nucleoplasm.

Its subcellular location is the nucleus. It localises to the nucleolus. The protein localises to the nucleoplasm. Nuclear chaperone required for maturation and nuclear export of pre-60S ribosome subunits. Functions at successive maturation steps to remove ribosomal factors at critical transition points, first driving the exit of early pre-60S particles from the nucleolus and then driving late pre-60S particles from the nucleus. This is Midasin (mdn1) from Schizosaccharomyces pombe (strain 972 / ATCC 24843) (Fission yeast).